We begin with the raw amino-acid sequence, 78 residues long: Structural DNA-binding protein p10 (78 aa).

The span at 1–27 shows a compositional bias: low complexity; the sequence is MPTKAGTKSTANKKTTKGSSKSGSSRG. The disordered stretch occupies residues 1–41; that stretch reads MPTKAGTKSTANKKTTKGSSKSGSSRGHTGKTHASSSMHSG.

Belongs to the asfivirus P10 family.

It localises to the virion. May play a role in genome packaging through direct interaction with viral DNA. Binds to ssDNA and dsDNA with the same apparent affinity in vitro. The sequence is that of Structural DNA-binding protein p10 from African swine fever virus (strain Badajoz 1971 Vero-adapted) (Ba71V).